A 621-amino-acid polypeptide reads, in one-letter code: 1-deoxy-D-xylulose-5-phosphate synthase (621 aa).

Thiamine diphosphate is bound by residues His80 and 121–123 (GHS). Asp152 is a binding site for Mg(2+). Thiamine diphosphate contacts are provided by residues 153 to 154 (GA), Asn181, Tyr288, and Glu370. Residue Asn181 coordinates Mg(2+).

This sequence belongs to the transketolase family. DXPS subfamily. In terms of assembly, homodimer. The cofactor is Mg(2+). Requires thiamine diphosphate as cofactor.

It catalyses the reaction D-glyceraldehyde 3-phosphate + pyruvate + H(+) = 1-deoxy-D-xylulose 5-phosphate + CO2. The protein operates within metabolic intermediate biosynthesis; 1-deoxy-D-xylulose 5-phosphate biosynthesis; 1-deoxy-D-xylulose 5-phosphate from D-glyceraldehyde 3-phosphate and pyruvate: step 1/1. Functionally, catalyzes the acyloin condensation reaction between C atoms 2 and 3 of pyruvate and glyceraldehyde 3-phosphate to yield 1-deoxy-D-xylulose-5-phosphate (DXP). The polypeptide is 1-deoxy-D-xylulose-5-phosphate synthase (Vibrio campbellii (strain ATCC BAA-1116)).